The primary structure comprises 525 residues: Glutathione hydrolase-like YwrD proenzyme (525 aa).

Threonine 339 acts as the Nucleophile in catalysis.

The protein belongs to the gamma-glutamyltransferase family. In terms of assembly, this enzyme consists of two polypeptide chains, which are synthesized from a single polypeptide. In terms of processing, cleaved by autocatalysis into a large and a small subunit.

The enzyme catalyses an N-terminal (5-L-glutamyl)-[peptide] + an alpha-amino acid = 5-L-glutamyl amino acid + an N-terminal L-alpha-aminoacyl-[peptide]. It carries out the reaction glutathione + H2O = L-cysteinylglycine + L-glutamate. The catalysed reaction is an S-substituted glutathione + H2O = an S-substituted L-cysteinylglycine + L-glutamate. Its function is as follows. Overexpressed protein with an N-terminal His tag has been reported not to hydrolyze glutathione; it is not clear if the construct is processed to 2 subunits. The polypeptide is Glutathione hydrolase-like YwrD proenzyme (ywrD) (Bacillus subtilis (strain 168)).